We begin with the raw amino-acid sequence, 104 residues long: UPF0145 protein DET1617 (104 aa).

It belongs to the UPF0145 family.

The protein is UPF0145 protein DET1617 of Dehalococcoides mccartyi (strain ATCC BAA-2266 / KCTC 15142 / 195) (Dehalococcoides ethenogenes (strain 195)).